Reading from the N-terminus, the 172-residue chain is 3-hydroxydecanoyl-[acyl-carrier-protein] dehydratase (172 aa).

His71 is a catalytic residue.

This sequence belongs to the thioester dehydratase family. FabA subfamily. In terms of assembly, homodimer.

Its subcellular location is the cytoplasm. The enzyme catalyses a (3R)-hydroxyacyl-[ACP] = a (2E)-enoyl-[ACP] + H2O. The catalysed reaction is (3R)-hydroxydecanoyl-[ACP] = (2E)-decenoyl-[ACP] + H2O. It catalyses the reaction (2E)-decenoyl-[ACP] = (3Z)-decenoyl-[ACP]. The protein operates within lipid metabolism; fatty acid biosynthesis. Its function is as follows. Necessary for the introduction of cis unsaturation into fatty acids. Catalyzes the dehydration of (3R)-3-hydroxydecanoyl-ACP to E-(2)-decenoyl-ACP and then its isomerization to Z-(3)-decenoyl-ACP. Can catalyze the dehydratase reaction for beta-hydroxyacyl-ACPs with saturated chain lengths up to 16:0, being most active on intermediate chain length. The polypeptide is 3-hydroxydecanoyl-[acyl-carrier-protein] dehydratase (Brucella ovis (strain ATCC 25840 / 63/290 / NCTC 10512)).